Reading from the N-terminus, the 386-residue chain is Peroxisomal membrane protein PEX13 (386 aa).

The interval 1-76 is disordered; the sequence is MSSTAVPRPK…SSGTYGESNT (76 aa). Topologically, residues 1-263 are lumenal; the sequence is MSSTAVPRPK…KATRRKISWK (263 aa). A compositionally biased stretch (polar residues) spans 23–39; the sequence is RNAQSLSAMMTSNQQDS. The span at 44–55 shows a compositional bias: low complexity; sequence ESNNSNSASESA. Residues 65-76 show a composition bias toward polar residues; that stretch reads LNSSGTYGESNT. Residues 264-280 traverse the membrane as a helical segment; that stretch reads PLLFFLMAVFGFPYLLN. The Cytoplasmic portion of the chain corresponds to 281–386; sequence KFITKLQTSG…EHVDDETRTH (106 aa). The SH3 domain maps to 306–372; the sequence is SKLEFARALY…PYNYIEIIKR (67 aa).

Belongs to the peroxin-13 family. Interacts (via SH3 domain) with PEX14 (via SH3-binding motif); forming the PEX13-PEX14 docking complex.

The protein resides in the peroxisome membrane. Its function is as follows. Component of the PEX13-PEX14 docking complex, a translocon channel that specifically mediates the import of peroxisomal cargo proteins bound to PEX5 or PEX21 receptors. The PEX13-PEX14 docking complex forms a large import pore which can be opened to a diameter of about 9 nm. Mechanistically, PEX5 (or PEX21) receptor along with cargo proteins associates with the PEX14 subunit of the PEX13-PEX14 docking complex in the cytosol, leading to the insertion of the receptor into the organelle membrane with the concomitant translocation of the cargo into the peroxisome matrix. In Saccharomyces cerevisiae (strain ATCC 204508 / S288c) (Baker's yeast), this protein is Peroxisomal membrane protein PEX13.